Reading from the N-terminus, the 549-residue chain is Ribosomal protein S6 kinase-like 1 (549 aa).

The 29-residue stretch at I87–N115 folds into the MIT domain. In terms of domain architecture, Protein kinase spans S145–F539. Residues R151–I159 and K177 contribute to the ATP site. Residues L260–H325 are disordered. D412 functions as the Proton acceptor in the catalytic mechanism.

It belongs to the protein kinase superfamily. Ser/Thr protein kinase family. S6 kinase subfamily.

It catalyses the reaction L-seryl-[protein] + ATP = O-phospho-L-seryl-[protein] + ADP + H(+). It carries out the reaction L-threonyl-[protein] + ATP = O-phospho-L-threonyl-[protein] + ADP + H(+). This is Ribosomal protein S6 kinase-like 1 (RPS6KL1) from Pongo abelii (Sumatran orangutan).